Reading from the N-terminus, the 232-residue chain is Very-long-chain (3R)-3-hydroxyacyl-CoA dehydratase 4 (232 aa).

Residues 1–19 (MGPSVLPAWLQPRYRKNVY) lie on the Cytoplasmic side of the membrane. A helical membrane pass occupies residues 20–40 (LFIYYLIQFCGHSWILANMTV). The Lumenal portion of the chain corresponds to 41–56 (RFFSFGKDSMADTFYA). The chain crosses the membrane as a helical span at residues 57-77 (IGLVMRVCQSISLLELLHIYI). The Cytoplasmic portion of the chain corresponds to 78-112 (GIESNQLFPRFLQLTERVIILFGVITSQEEVQEKC). Residues 113-133 (VVCVLFILWNLLDMVRYTYSM) form a helical membrane-spanning segment. Topologically, residues 134–135 (LS) are lumenal. Residues 136 to 156 (VIGTSYAALTWLSQTLWMPIY) form a helical membrane-spanning segment. Tyr156 is an active-site residue. Residue Pro157 is a topological domain, cytoplasmic. The helical transmembrane segment at 158–178 (LCVLAEAFTIYQSLPYFESFG) threads the bilayer. Glu163 is a catalytic residue. The Lumenal segment spans residues 179 to 189 (TNSTVLPFDLS). The chain crosses the membrane as a helical span at residues 190 to 210 (TCFPYVLKLYLMMLFIGMYFT). Over 211 to 232 (YSHLYTERKDFLRVFSVKQKNV) the chain is Cytoplasmic.

It belongs to the very long-chain fatty acids dehydratase HACD family. As to quaternary structure, may interact with enzymes of the ELO family (including ELOVL1); with those enzymes that mediate condensation, the first of the four steps of the reaction cycle responsible for fatty acids elongation, may be part of a larger fatty acids elongase complex.

It localises to the endoplasmic reticulum membrane. The catalysed reaction is a very-long-chain (3R)-3-hydroxyacyl-CoA = a very-long-chain (2E)-enoyl-CoA + H2O. It carries out the reaction (3R)-hydroxyhexadecanoyl-CoA = (2E)-hexadecenoyl-CoA + H2O. It participates in lipid metabolism; fatty acid biosynthesis. Functionally, catalyzes the third of the four reactions of the long-chain fatty acids elongation cycle. This endoplasmic reticulum-bound enzymatic process, allows the addition of two carbons to the chain of long- and very long-chain fatty acids/VLCFAs per cycle. This enzyme catalyzes the dehydration of the 3-hydroxyacyl-CoA intermediate into trans-2,3-enoyl-CoA, within each cycle of fatty acid elongation. Thereby, it participates in the production of VLCFAs of different chain lengths that are involved in multiple biological processes as precursors of membrane lipids and lipid mediators. The chain is Very-long-chain (3R)-3-hydroxyacyl-CoA dehydratase 4 from Mus musculus (Mouse).